Here is a 749-residue protein sequence, read N- to C-terminus: 5-methyltetrahydropteroyltriglutamate--homocysteine methyltransferase (749 aa).

5-methyltetrahydropteroyltri-L-glutamate-binding positions include 18-21 and lysine 112; that span reads REWK. L-homocysteine is bound by residues 420-422 and glutamate 473; that span reads IGS. Residues 420–422 and glutamate 473 contribute to the L-methionine site; that span reads IGS. Residue tryptophan 550 participates in 5-methyltetrahydropteroyltri-L-glutamate binding. An L-homocysteine-binding site is contributed by aspartate 588. L-methionine is bound at residue aspartate 588. A 5-methyltetrahydropteroyltri-L-glutamate-binding site is contributed by glutamate 594. 3 residues coordinate Zn(2+): histidine 630, cysteine 632, and glutamate 654. The active-site Proton donor is the histidine 683. Cysteine 715 is a Zn(2+) binding site.

The protein belongs to the vitamin-B12 independent methionine synthase family. The cofactor is Zn(2+).

The catalysed reaction is 5-methyltetrahydropteroyltri-L-glutamate + L-homocysteine = tetrahydropteroyltri-L-glutamate + L-methionine. The protein operates within amino-acid biosynthesis; L-methionine biosynthesis via de novo pathway; L-methionine from L-homocysteine (MetE route): step 1/1. Catalyzes the transfer of a methyl group from 5-methyltetrahydrofolate to homocysteine resulting in methionine formation. The sequence is that of 5-methyltetrahydropteroyltriglutamate--homocysteine methyltransferase from Staphylococcus haemolyticus (strain JCSC1435).